A 309-amino-acid chain; its full sequence is Taste receptor type 2 member 31 (309 aa).

Topologically, residues 1-2 (MT) are extracellular. The helical transmembrane segment at 3–23 (TFIPIIFSSVVVVLFVIGNFA) threads the bilayer. At 24 to 55 (NGFIALVNSIERVKRQKISFADQILTALAVSR) the chain is on the cytoplasmic side. Residues 56 to 76 (VGLLWVLLLNWYSTVFNPAFY) traverse the membrane as a helical segment. At 77 to 100 (SVEVRTTAYNVWAVTGHFSNWLAT) the chain is on the extracellular side. A helical membrane pass occupies residues 101 to 121 (SLSIFYLLKIANFSNLIFLHL). Topologically, residues 122 to 126 (KRRVK) are cytoplasmic. A helical transmembrane segment spans residues 127–147 (SVILVMLLGPLLFLACQLFVI). Residues 148–181 (NMKEIVRTKEYEGNLTWKIKLRSAVYLSDATVTT) are Extracellular-facing. An N-linked (GlcNAc...) asparagine glycan is attached at Asn-161. A helical membrane pass occupies residues 182 to 202 (LGNLVPFTLTLLCFLLLICSL). The Cytoplasmic segment spans residues 203-229 (CKHLKKMQLHGKGSQDPSTKVHIKALQ). Residues 230-250 (TVIFFLLLCAVYFLSIMISVW) form a helical membrane-spanning segment. Residues 251-259 (SFGSLENKP) lie on the Extracellular side of the membrane. A helical membrane pass occupies residues 260–280 (VFMFCKAIRFSYPSIHPFILI). Topologically, residues 281 to 309 (WGNKKLKQTFLSVLRQVRYWVKGEKPSSP) are cytoplasmic.

The protein belongs to the G-protein coupled receptor T2R family. In terms of tissue distribution, expressed in subsets of taste receptor cells of the tongue and exclusively in gustducin-positive cells.

It is found in the membrane. Receptor that may play a role in the perception of bitterness and is gustducin-linked. May play a role in sensing the chemical composition of the gastrointestinal content. The activity of this receptor may stimulate alpha gustducin, mediate PLC-beta-2 activation and lead to the gating of TRPM5. Activated by the sulfonyl amide sweeteners saccharin and acesulfame K. The protein is Taste receptor type 2 member 31 (TAS2R31) of Homo sapiens (Human).